The sequence spans 236 residues: 2-C-methyl-D-erythritol 4-phosphate cytidylyltransferase (236 aa).

It belongs to the IspD/TarI cytidylyltransferase family. IspD subfamily. As to quaternary structure, homodimer.

It carries out the reaction 2-C-methyl-D-erythritol 4-phosphate + CTP + H(+) = 4-CDP-2-C-methyl-D-erythritol + diphosphate. The protein operates within isoprenoid biosynthesis; isopentenyl diphosphate biosynthesis via DXP pathway; isopentenyl diphosphate from 1-deoxy-D-xylulose 5-phosphate: step 2/6. Its function is as follows. Catalyzes the formation of 4-diphosphocytidyl-2-C-methyl-D-erythritol from CTP and 2-C-methyl-D-erythritol 4-phosphate (MEP). This is 2-C-methyl-D-erythritol 4-phosphate cytidylyltransferase from Escherichia coli O7:K1 (strain IAI39 / ExPEC).